Here is a 455-residue protein sequence, read N- to C-terminus: Putative RNA polymerase II subunit B1 CTD phosphatase rpap-2 (455 aa).

The RTR1-type zinc finger occupies 36 to 121 (EHLPHLHCLG…LDEHPLWITG (86 aa)). 4 residues coordinate Zn(2+): Cys-59, Cys-64, Cys-97, and Cys-101.

The protein belongs to the RPAP2 family.

The protein resides in the nucleus. It catalyses the reaction O-phospho-L-seryl-[protein] + H2O = L-seryl-[protein] + phosphate. It carries out the reaction O-phospho-L-threonyl-[protein] + H2O = L-threonyl-[protein] + phosphate. Functionally, putative RNA polymerase II subunit B1 C-terminal domain (CTD) phosphatase involved in RNA polymerase II transcription regulation. The sequence is that of Putative RNA polymerase II subunit B1 CTD phosphatase rpap-2 from Caenorhabditis elegans.